Here is an 897-residue protein sequence, read N- to C-terminus: 4-hydroxyphenylacetate decarboxylase glycyl radical subunit (897 aa).

In terms of domain architecture, PFL spans 35 to 770 (ESTQKLMDIY…VTLATADGRL (736 aa)). The 4-hydroxyphenylacetate site is built by Ser-344 and Cys-503. Cys-503 serves as the catalytic Cysteine radical intermediate. The Proton donor role is filled by Glu-505. 4-hydroxyphenylacetate-binding residues include His-536 and Glu-637. A Glycine radical domain is found at 778–897 (GSVSAAAGTD…EVIYRTEYDK (120 aa)). A Glycine radical modification is found at Gly-873.

This sequence belongs to the glycyl radical enzyme (GRE) family. HPAD subfamily. Heterooctamer consisting of 4 large (HpdB) subunits and 4 small (HpdC) subunits, arranged as a tetramer of heterodimers. Also forms a catalytically inactive homodimer. In terms of processing, requires the activating protein CsdA to generate the key active site glycyl radical that is involved in catalysis. Phosphorylated on serine. Phosphorylation may trigger the formation of the active heterooctamers and thereby regulates enzyme activity.

The enzyme catalyses 4-hydroxyphenylacetate + H(+) = 4-methylphenol + CO2. The catalysed reaction is 3,4-dihydroxyphenylacetate + H(+) = 4-methylcatechol + CO2. Functionally, glycyl radical subunit of the HPA decarboxylase that decarboxylates phenylacetates with a hydroxyl group in the p-position. Active toward 4-hydroxyphenylacetate and 3,4-dihydroxyphenylacetate, forming 4-methylphenol and 4-methylcatechol, respectively. Is likely involved in the catabolism of aromatic amino acids such as tyrosine fermentation. 4-methylphenol (p-cresol) formation provides metabolic toxicity, which allows an active suppression of other microbes and may provide growth advantages for the producers in highly competitive environments. The large subunit is the catalytic subunit that binds the substrate. The polypeptide is 4-hydroxyphenylacetate decarboxylase glycyl radical subunit (Clostridium scatologenes).